We begin with the raw amino-acid sequence, 521 residues long: Transcription activator of gluconeogenesis SS1G_02293 (521 aa).

A compositionally biased stretch (acidic residues) spans 1 to 12 (MSGETEIDDPEV). The interval 1-75 (MSGETEIDDP…KFDPKDPLRP (75 aa)) is disordered. Composition is skewed to basic and acidic residues over residues 21–49 (YSDH…RPDG) and 65–74 (PKFDPKDPLR). Residues 84 to 112 (CFACQRAHLTCGDERPCQRCIKRGLADAC) constitute a DNA-binding region (zn(2)-C6 fungal-type). Disordered stretches follow at residues 273–308 (SGSA…NPPF), 322–358 (VAPP…RDPS), and 478–501 (NTGN…PRMR). Residues 275–287 (SAETPPQDSSAGM) show a composition bias toward polar residues. 3 stretches are compositionally biased toward low complexity: residues 297–308 (NNNPAFNNNPPF), 337–351 (KSGP…SALG), and 480–494 (GNSG…GRGS). The PAS domain occupies 426 to 497 (TLFEYEDFML…GSSGRGSFTT (72 aa)).

Belongs to the ERT1/acuK family.

It localises to the nucleus. Transcription factor which regulates nonfermentable carbon utilization. Activator of gluconeogenetic genes. This chain is Transcription activator of gluconeogenesis SS1G_02293, found in Sclerotinia sclerotiorum (strain ATCC 18683 / 1980 / Ss-1) (White mold).